Consider the following 180-residue polypeptide: Inosine/xanthosine triphosphatase (180 aa).

8–13 provides a ligand contact to substrate; sequence TTNPAK. Mg(2+) is bound at residue Asp-38.

This sequence belongs to the YjjX NTPase family. As to quaternary structure, homodimer. Mg(2+) serves as cofactor. The cofactor is Mn(2+).

The enzyme catalyses XTP + H2O = XDP + phosphate + H(+). It catalyses the reaction ITP + H2O = IDP + phosphate + H(+). Its function is as follows. Phosphatase that hydrolyzes non-canonical purine nucleotides such as XTP and ITP to their respective diphosphate derivatives. Probably excludes non-canonical purines from DNA/RNA precursor pool, thus preventing their incorporation into DNA/RNA and avoiding chromosomal lesions. This Yersinia pseudotuberculosis serotype O:1b (strain IP 31758) protein is Inosine/xanthosine triphosphatase.